Consider the following 170-residue polypeptide: Probable inosine/xanthosine triphosphatase (170 aa).

7–12 (TTNPVK) provides a ligand contact to substrate. Aspartate 37 contributes to the Mg(2+) binding site.

It belongs to the YjjX NTPase family. As to quaternary structure, homodimer. Requires Mg(2+) as cofactor. Mn(2+) is required as a cofactor.

It carries out the reaction XTP + H2O = XDP + phosphate + H(+). It catalyses the reaction ITP + H2O = IDP + phosphate + H(+). Functionally, phosphatase that hydrolyzes non-canonical purine nucleotides such as XTP and ITP to their respective diphosphate derivatives. Probably excludes non-canonical purines from DNA/RNA precursor pool, thus preventing their incorporation into DNA/RNA and avoiding chromosomal lesions. The polypeptide is Probable inosine/xanthosine triphosphatase (Methanopyrus kandleri (strain AV19 / DSM 6324 / JCM 9639 / NBRC 100938)).